A 444-amino-acid chain; its full sequence is Cell wall mannoprotein PST1 (444 aa).

The signal sequence occupies residues 1–19; sequence MQLHSLIASTALLITSALA. Residues N57, N76, N83, N86, N196, N210, N228, N235, N242, N263, N268, N280, N292, N305, and N329 are each glycosylated (N-linked (GlcNAc...) asparagine). Low complexity-rich tracts occupy residues 359–381 and 395–418; these read SVKLSSTSKSQSSQTTAKVSKSS and KAAASASSVSSSGASSSSSKSSKG. The interval 359 to 418 is disordered; that stretch reads SVKLSSTSKSQSSQTTAKVSKSSSKAEEKKFTSGDIKAAASASSVSSSGASSSSSKSSKG. The GPI-anchor amidated asparagine moiety is linked to residue N419. Residues 420–444 constitute a propeptide, removed in mature form; it reads AAIMAPIGQTTPLVGLLTAIIMSIM.

It belongs to the SPS2 family. Extensively N- and O-mannosylated.

It localises to the cell membrane. The protein resides in the secreted. The protein localises to the cell wall. Has a partially redundant function to ECM33 in cell wall integrity. May be involved in a repair mechanism activated in response to cell wall damage. In Saccharomyces cerevisiae (strain ATCC 204508 / S288c) (Baker's yeast), this protein is Cell wall mannoprotein PST1 (PST1).